A 331-amino-acid chain; its full sequence is Putative peptidyl-prolyl cis-trans isomerase RC0542 (331 aa).

Residues 33–54 (EQTASNNSSTDENQTSINNEPP) form a disordered region. Positions 128-226 (GHVVTVFYQI…SNEVKIYDDE (99 aa)) constitute a PPIase FKBP-type domain.

The catalysed reaction is [protein]-peptidylproline (omega=180) = [protein]-peptidylproline (omega=0). The chain is Putative peptidyl-prolyl cis-trans isomerase RC0542 from Rickettsia conorii (strain ATCC VR-613 / Malish 7).